A 133-amino-acid chain; its full sequence is Large ribosomal subunit protein uL11 (133 aa).

Belongs to the universal ribosomal protein uL11 family. As to quaternary structure, part of the ribosomal stalk of the 50S ribosomal subunit. Interacts with L10 and the large rRNA to form the base of the stalk. L10 forms an elongated spine to which 2 L12 dimers bind in a sequential fashion forming a pentameric L10(L12)2(L12)2 complex. Post-translationally, one or more lysine residues are methylated.

In terms of biological role, forms part of the ribosomal stalk which helps the ribosome interact with GTP-bound translation factors. In Geobacillus stearothermophilus (Bacillus stearothermophilus), this protein is Large ribosomal subunit protein uL11.